The following is a 144-amino-acid chain: Giant hemoglobin AIII chain (144 aa).

Residues 2–144 (ECGPLQRLKV…DVITGGIQGN (143 aa)) enclose the Globin domain. Residue histidine 95 participates in heme b binding.

It belongs to the globin family. Giant hemoglobin is composed of four heme-containing chains (AI to AIV), and two linker chains (AV and AVI).

In Lamellibrachia sp. (Deep-sea giant tube worm), this protein is Giant hemoglobin AIII chain.